Consider the following 174-residue polypeptide: uncharacterized protein (174 aa).

Basic and acidic residues-rich tracts occupy residues 1–31 (MDKHGVKTPLWKKETEELRAEDAEQEEGKEG) and 52–67 (EPPRVAEEGEGRERRS). A disordered region spans residues 1 to 69 (MDKHGVKTPL…GEGRERRSVS (69 aa)).

This is an uncharacterized protein from Homo sapiens (Human).